The primary structure comprises 472 residues: Cysteine--tRNA ligase (472 aa).

C29 provides a ligand contact to Zn(2+). A 'HIGH' region motif is present at residues 31–41 (PTVYDFAHIGN). The Zn(2+) site is built by C227, H252, and E256. The short motif at 285–289 (KMSKS) is the 'KMSKS' region element. K288 is an ATP binding site.

This sequence belongs to the class-I aminoacyl-tRNA synthetase family. In terms of assembly, monomer. Requires Zn(2+) as cofactor.

It localises to the cytoplasm. The enzyme catalyses tRNA(Cys) + L-cysteine + ATP = L-cysteinyl-tRNA(Cys) + AMP + diphosphate. The chain is Cysteine--tRNA ligase from Bradyrhizobium sp. (strain BTAi1 / ATCC BAA-1182).